We begin with the raw amino-acid sequence, 453 residues long: Na(+)/H(+) antiporter NhaA 2 (453 aa).

12 helical membrane-spanning segments follow: residues 23 to 43 (FLHI…AALI), 74 to 94 (LHFW…GMEI), 111 to 131 (LPMA…LSFG), 139 to 159 (GWAV…ALLG), 168 to 188 (VFLL…IAFF), 191 to 211 (GGLD…VIGL), 214 to 234 (IGVG…LGIL), 235 to 255 (LTGA…PVTA), 316 to 336 (VAFG…LSGV), 345 to 365 (WVMI…IVSV), 386 to 406 (IMLV…IANL), and 419 to 439 (LGVL…GVWS).

Belongs to the NhaA Na(+)/H(+) (TC 2.A.33) antiporter family.

Its subcellular location is the cell inner membrane. It catalyses the reaction Na(+)(in) + 2 H(+)(out) = Na(+)(out) + 2 H(+)(in). Its function is as follows. Na(+)/H(+) antiporter that extrudes sodium in exchange for external protons. The sequence is that of Na(+)/H(+) antiporter NhaA 2 from Pseudomonas putida (strain ATCC 47054 / DSM 6125 / CFBP 8728 / NCIMB 11950 / KT2440).